The primary structure comprises 266 residues: N-acetyltransferase ECO1 (266 aa).

A CCHH-type zinc finger spans residues 31–55 (KKCTECQMSYIIDSPADCAEHKKYH). Positions 108–266 (TPGKTAEVKA…SGELLIPCYI (159 aa)) constitute an N-acetyltransferase domain.

The protein belongs to the acetyltransferase family. ECO subfamily.

The protein resides in the nucleus. Probable acetyltransferase required for the establishment of sister chromatid cohesion and couple the processes of cohesion and DNA replication to ensure that only sister chromatids become paired together. In contrast to the structural cohesins, the deposition and establishment factors are required only during S phase. Acts by acetylating the cohesin complex component SMC3. The chain is N-acetyltransferase ECO1 (ECO1) from Eremothecium gossypii (strain ATCC 10895 / CBS 109.51 / FGSC 9923 / NRRL Y-1056) (Yeast).